Here is a 298-residue protein sequence, read N- to C-terminus: Type II methyltransferase M.MjaIV (298 aa).

It catalyses the reaction a 2'-deoxyadenosine in DNA + S-adenosyl-L-methionine = an N(6)-methyl-2'-deoxyadenosine in DNA + S-adenosyl-L-homocysteine + H(+). Its function is as follows. A methylase that recognizes the double-stranded sequence 5'-GTNNAC-3', methylates A-5 on both strands, and protects the DNA from cleavage by the MjaIV endonuclease. This is Type II methyltransferase M.MjaIV (mjaIVMP) from Methanocaldococcus jannaschii (strain ATCC 43067 / DSM 2661 / JAL-1 / JCM 10045 / NBRC 100440) (Methanococcus jannaschii).